The sequence spans 362 residues: tRNA N6-adenosine threonylcarbamoyltransferase (362 aa).

Residues H120 and H124 each contribute to the Fe cation site. Substrate contacts are provided by residues 142–146 (LASGG), D175, G188, and N288. Position 316 (D316) interacts with Fe cation. Residues 342-351 (RPRWPLDPDA) are compositionally biased toward basic and acidic residues. Positions 342-362 (RPRWPLDPDAPKAAGAGGVKA) are disordered.

This sequence belongs to the KAE1 / TsaD family. The cofactor is Fe(2+).

It localises to the cytoplasm. The enzyme catalyses L-threonylcarbamoyladenylate + adenosine(37) in tRNA = N(6)-L-threonylcarbamoyladenosine(37) in tRNA + AMP + H(+). Functionally, required for the formation of a threonylcarbamoyl group on adenosine at position 37 (t(6)A37) in tRNAs that read codons beginning with adenine. Is involved in the transfer of the threonylcarbamoyl moiety of threonylcarbamoyl-AMP (TC-AMP) to the N6 group of A37, together with TsaE and TsaB. TsaD likely plays a direct catalytic role in this reaction. The protein is tRNA N6-adenosine threonylcarbamoyltransferase of Rhodospirillum rubrum (strain ATCC 11170 / ATH 1.1.1 / DSM 467 / LMG 4362 / NCIMB 8255 / S1).